Here is a 476-residue protein sequence, read N- to C-terminus: Angiotensinogen (476 aa).

Positions 1-24 (MAPAGVSLRATILCLLAWAGLAAG) are cleaved as a signal peptide. D25 carries the beta-decarboxylated aspartate; in form angiotensin-A modification. N38, N161, N295, and N319 each carry an N-linked (GlcNAc...) asparagine glycan. A disulfide bond links C42 and C162.

The protein belongs to the serpin family. As to quaternary structure, during pregnancy, exists as a disulfide-linked 2:2 heterotetramer with the proform of PRG2 and as a complex (probably a 2:2:2 heterohexamer) with pro-PRG2 and C3dg. Post-translationally, beta-decarboxylation of Asp-25 in angiotensin-2, by mononuclear leukocytes produces alanine. The resulting peptide form, angiotensin-A, has the same affinity for the AT1 receptor as angiotensin-2, but a higher affinity for the AT2 receptor. In response to low blood pressure, the enzyme renin/REN cleaves angiotensinogen to produce angiotensin-1. Angiotensin-1 is a substrate of ACE (angiotensin converting enzyme) that removes a dipeptide to yield the physiologically active peptide angiotensin-2. Angiotensin-1 and angiotensin-2 can be further processed to generate angiotensin-3, angiotensin-4. Angiotensin 1-9 is cleaved from angiotensin-1 by ACE2 and can be further processed by ACE to produce angiotensin 1-7, angiotensin 1-5 and angiotensin 1-4. Angiotensin 1-7 has also been proposed to be cleaved from angiotensin-2 by ACE2 or from angiotensin-1 by MME (neprilysin). In terms of processing, the disulfide bond is labile. Angiotensinogen is present in the circulation in a near 40:60 ratio with the oxidized disulfide-bonded form, which preferentially interacts with receptor-bound renin. In terms of tissue distribution, expressed by the liver and secreted in plasma.

It is found in the secreted. Functionally, essential component of the renin-angiotensin system (RAS), a potent regulator of blood pressure, body fluid and electrolyte homeostasis. In terms of biological role, acts directly on vascular smooth muscle as a potent vasoconstrictor, affects cardiac contractility and heart rate through its action on the sympathetic nervous system, and alters renal sodium and water absorption through its ability to stimulate the zona glomerulosa cells of the adrenal cortex to synthesize and secrete aldosterone. Acts by binding to angiotensin receptors AGTR1 and AGTR2. Also binds the DEAR/FBXW7-AS1 receptor. Its function is as follows. Stimulates aldosterone release. Is a ligand for the G-protein coupled receptor MAS1. Has vasodilator and antidiuretic effects. Has an antithrombotic effect that involves MAS1-mediated release of nitric oxide from platelets. The polypeptide is Angiotensinogen (Homo sapiens (Human)).